The chain runs to 567 residues: Platelet glycoprotein V (567 aa).

Residues 1 to 16 form the signal peptide; sequence MLRSALLSAVLPLLRA. The LRRNT domain maps to 17-50; that stretch reads QPFPCPKTCKCVVRDAAQCSGGSVAHIAELGLPT. Over 17 to 522 the chain is Extracellular; that stretch reads QPFPCPKTCK…ESPNNRLYWG (506 aa). N-linked (GlcNAc...) asparagine glycans are attached at residues asparagine 51 and asparagine 67. LRR repeat units lie at residues 75-96, 99-120, 123-144, 147-168, 171-193, 195-216, 219-240, 243-264, 267-288, 291-312, 315-337, 340-361, 364-385, and 388-409; these read VLQRQMLSDSHISAIDPGTFND, KLKTLRLTRNKISRLPRAILDK, LLEQLFLDHNALRDLDQNLFQQ, NLQELGLNQNQLSFLPANLFSS, ELKLLDLSRNNLTHLPKGLLGAQ, KLEKLLLYSNQLTSVDSGLLSN, ALTELRLERNHLRSVAPGAFDR, NLSSLTLSGNLLESLPPALFLH, SVSRLTLFENPLEELPDVLFGE, GLRELWLNGTHLSTLPAAAFRN, GLQTLGLTRNPRLSALPRGVFQG, ELRVLGLHTNALAELRDDALRG, HLRQVSLRHNRLRALPRTLFRN, and SLESVQLEHNQLETLPGDVFAA. The N-linked (GlcNAc...) asparagine glycan is linked to asparagine 181. Asparagine 243 carries N-linked (GlcNAc...) asparagine glycosylation. N-linked (GlcNAc...) asparagine glycosylation is found at asparagine 298 and asparagine 312. Residue asparagine 385 is glycosylated (N-linked (GlcNAc...) asparagine). One can recognise an LRRCT domain in the interval 421–474; that stretch reads NPWLCDCGLWRFLQWLRHHPDILGRDEPPQCRGPEPRASLSFWELLQGDPWCPD. A helical membrane pass occupies residues 523 to 543; sequence LYILLLVAQAIIAAFIVFAMI. The Cytoplasmic portion of the chain corresponds to 544-567; sequence KIGQLFRTLIREKLLLEAMGKSCN.

It is found in the membrane. Its function is as follows. The GPIb-V-IX complex functions as the vWF receptor and mediates vWF-dependent platelet adhesion to blood vessels. The adhesion of platelets to injured vascular surfaces in the arterial circulation is a critical initiating event in hemostasis. This is Platelet glycoprotein V (Gp5) from Mus musculus (Mouse).